Here is a 90-residue protein sequence, read N- to C-terminus: Putative membrane protein insertion efficiency factor (90 aa).

This sequence belongs to the UPF0161 family.

The protein resides in the cell membrane. Could be involved in insertion of integral membrane proteins into the membrane. The polypeptide is Putative membrane protein insertion efficiency factor (Oceanobacillus iheyensis (strain DSM 14371 / CIP 107618 / JCM 11309 / KCTC 3954 / HTE831)).